The following is a 390-amino-acid chain: Ammonium/H(+) antiporter subunit AmhT (390 aa).

The next 10 membrane-spanning stretches (helical) occupy residues 2–22, 31–51, 52–72, 94–114, 143–163, 178–198, 212–232, 266–286, 288–308, and 351–371; these read VIPE…TGFV, VVIF…SHLL, HFAG…EFPL, FGVT…SLII, FMLG…AVLV, LLVV…VFLF, DLFI…ALYL, LLLP…EGIP, IPLL…VGVL, and VFIL…PSIA.

Belongs to the monovalent cation:proton antiporter 2 (CPA2) transporter (TC 2.A.37) family. As to quaternary structure, interacts with AmhM.

The protein localises to the cell membrane. With respect to regulation, amhT alone exhibits antiport activity, but interaction with AmhM confers different properties, such as higher KM for potassium. Its function is as follows. Ammonium/proton antiporter that mediates the efflux of ammonium ions. Can also transport potassium or rubidium, but not sodium or lithium. This chain is Ammonium/H(+) antiporter subunit AmhT (amhT), found in Alkalihalophilus pseudofirmus (strain ATCC BAA-2126 / JCM 17055 / OF4) (Bacillus pseudofirmus).